Reading from the N-terminus, the 299-residue chain is 4-diphosphocytidyl-2-C-methyl-D-erythritol kinase (299 aa).

Residue lysine 10 is part of the active site. 96-106 (PVAGGMAGGSA) provides a ligand contact to ATP. Aspartate 138 is a catalytic residue.

This sequence belongs to the GHMP kinase family. IspE subfamily.

It catalyses the reaction 4-CDP-2-C-methyl-D-erythritol + ATP = 4-CDP-2-C-methyl-D-erythritol 2-phosphate + ADP + H(+). It functions in the pathway isoprenoid biosynthesis; isopentenyl diphosphate biosynthesis via DXP pathway; isopentenyl diphosphate from 1-deoxy-D-xylulose 5-phosphate: step 3/6. Catalyzes the phosphorylation of the position 2 hydroxy group of 4-diphosphocytidyl-2C-methyl-D-erythritol. In Streptomyces coelicolor (strain ATCC BAA-471 / A3(2) / M145), this protein is 4-diphosphocytidyl-2-C-methyl-D-erythritol kinase.